Here is a 122-residue protein sequence, read N- to C-terminus: Large ribosomal subunit protein uL18 (122 aa).

Basic residues predominate over residues 1-20 (MLKKVSKNTNRQGRHQRVRN). The tract at residues 1–22 (MLKKVSKNTNRQGRHQRVRNKI) is disordered.

It belongs to the universal ribosomal protein uL18 family. As to quaternary structure, part of the 50S ribosomal subunit; part of the 5S rRNA/L5/L18/L25 subcomplex. Contacts the 5S and 23S rRNAs.

Its function is as follows. This is one of the proteins that bind and probably mediate the attachment of the 5S RNA into the large ribosomal subunit, where it forms part of the central protuberance. The polypeptide is Large ribosomal subunit protein uL18 (Alkaliphilus metalliredigens (strain QYMF)).